A 351-amino-acid polypeptide reads, in one-letter code: Synaptonemal complex central element protein 1 (351 aa).

Residues 1 to 10 (MAGRSLTSKA) are compositionally biased toward polar residues. Disordered regions lie at residues 1 to 31 (MAGR…TSSQ) and 267 to 351 (KCQQ…KELF). Residues 52 to 290 (RVEVLINRIN…ELEKHGMQVP (239 aa)) are a coiled coil.

The protein belongs to the SYCE family. As to quaternary structure, homodimer. Found in a complex with SYCP1 and SYCE2. Interacts with SYCP1, SYCE2 and SYCE3. Interacts with SIX6OS1.

It is found in the nucleus. The protein resides in the chromosome. In terms of biological role, major component of the transverse central element of synaptonemal complexes (SCS), formed between homologous chromosomes during meiotic prophase. Requires SYCP1 in order to be incorporated into the central element. May have a role in the synaptonemal complex assembly, stabilization and recombination. The chain is Synaptonemal complex central element protein 1 (SYCE1) from Homo sapiens (Human).